Reading from the N-terminus, the 1221-residue chain is MIDVNKFDSMQIGLASSDKIRSWSYGEVKKPETINYRTLKPEKDGLFDERIFGPTKDWECACGKYKRIRYKGVVCDRCGVEVTRSKVRRERMGHIELAAPVTHIWYFKGIPSRMGLVLDMSPRALEEIIYFASYVVTDAGDTALEKKQLLTEGEYREKREEYGDGFKAAMGAEAIRTLLRDVDLEKECAELKEELREATGQKRTRAVRRLDILEAFLNSGNRPDWMVMDAIPVIPPDLRPMVQLEGGRFATSDLNDLYRRVINRNNRLKRLLDLNAPGIIVQNEKRMLQEAVDALIDNGRRGRPVTGPGNRPLKSLSHMLKGKQGRFRQNLLGKRVDYSGRSVIDVGPKLKLNQMGIPHEMALELFKPFMMRELVKREMASNIKNAKRKIERRDEDIWDVLDDVIKEHPVLLNRAPTLHRLGIQAFEPVLVNGKAMRLHPLACEAYNADFDGDQMAIHVPLSDEAQAEARLLMLAAHHILAPKDGKPIISPSQDMTIGNYYITLEEAGREGEGMVFKDVNEVRTAYQNGYVHLHTRIGLQASSLAKLGTPFTDWQKERILITTAGKAIFNEILPADFPFLNEPTQENLTGMTPDKYFVEPGTDIKEFIKNQPLVGPFKSGFLSDIIAQVYKEYKVTATAELLDRMKDLGYYESTKSGLTVGIADVTVLKEKPEIIEQAHKNVATVAKQFRRGLITDEERYNRVISIWNKAKDDIQAKLVENMDPSNPIQMMSDSGARGNISNFTQLSGMRGLMAAPNGKTMELPVISNFREGLSVLEMFLSSHGARKGMTDTALKTANSGYLTRRLVDVAQDVIIREEDCHTDRGLDVTAITEGNEMIEPLYDRILGRYTMKEVKDPNTGEIIVPANVLVEESEARKIVDAGVQKVTIRSAFTCNTRHGVCERCYGRNLATGDEVEVGEAVGTVAAQSIGEPGTQLTMRNFHQGGVAGGDDITQGLPRVQELFEARNPKGRAVITEVTGVVDTVEENPAERTKEVTVKGETDTRTYSLPFTSVLKVKEGDQVHRGDALTVGSIDPKELIKVRDVLSTENYILREVQKVYRMQGVDISDKHIEIMTRQMLRKVRIMDPGDTDMLPGTLLDISQFKDRNTSAIIEGRIPATARPVLLGITKAALETNSFLSAASFQETTRVLTDAAIRGKNDPLVGLKENVIIGKTIPAGTGMKKYHDIEPEVVNSNVTDGVYSISELEEKINEQQNNVESSN.

C60, C62, C75, and C78 together coordinate Zn(2+). Mg(2+) is bound by residues D449, D451, and D453. The Zn(2+) site is built by C820, C894, C901, and C904.

Belongs to the RNA polymerase beta' chain family. As to quaternary structure, the RNAP catalytic core consists of 2 alpha, 1 beta, 1 beta' and 1 omega subunit. When a sigma factor is associated with the core the holoenzyme is formed, which can initiate transcription. It depends on Mg(2+) as a cofactor. Zn(2+) is required as a cofactor.

It carries out the reaction RNA(n) + a ribonucleoside 5'-triphosphate = RNA(n+1) + diphosphate. DNA-dependent RNA polymerase catalyzes the transcription of DNA into RNA using the four ribonucleoside triphosphates as substrates. This is DNA-directed RNA polymerase subunit beta' from Ligilactobacillus salivarius (strain UCC118) (Lactobacillus salivarius).